Here is a 260-residue protein sequence, read N- to C-terminus: Thiazole synthase (260 aa).

The active-site Schiff-base intermediate with DXP is Lys-96. 1-deoxy-D-xylulose 5-phosphate-binding positions include Gly-157, 183-184 (AG), and 205-206 (AS).

Belongs to the ThiG family. Homotetramer. Forms heterodimers with either ThiH or ThiS.

Its subcellular location is the cytoplasm. The enzyme catalyses [ThiS sulfur-carrier protein]-C-terminal-Gly-aminoethanethioate + 2-iminoacetate + 1-deoxy-D-xylulose 5-phosphate = [ThiS sulfur-carrier protein]-C-terminal Gly-Gly + 2-[(2R,5Z)-2-carboxy-4-methylthiazol-5(2H)-ylidene]ethyl phosphate + 2 H2O + H(+). Its pathway is cofactor biosynthesis; thiamine diphosphate biosynthesis. In terms of biological role, catalyzes the rearrangement of 1-deoxy-D-xylulose 5-phosphate (DXP) to produce the thiazole phosphate moiety of thiamine. Sulfur is provided by the thiocarboxylate moiety of the carrier protein ThiS. In vitro, sulfur can be provided by H(2)S. This Corynebacterium glutamicum (strain ATCC 13032 / DSM 20300 / JCM 1318 / BCRC 11384 / CCUG 27702 / LMG 3730 / NBRC 12168 / NCIMB 10025 / NRRL B-2784 / 534) protein is Thiazole synthase.